Reading from the N-terminus, the 461-residue chain is Serine/threonine-protein kinase ppk24, mitochondrial (461 aa).

In terms of domain architecture, Protein kinase spans Phe-120–Val-416. ATP contacts are provided by residues Ile-126–Ile-134 and Lys-153. The active-site Proton acceptor is Asp-256.

This sequence belongs to the protein kinase superfamily. Ser/Thr protein kinase family.

It localises to the mitochondrion. The enzyme catalyses L-seryl-[protein] + ATP = O-phospho-L-seryl-[protein] + ADP + H(+). It carries out the reaction L-threonyl-[protein] + ATP = O-phospho-L-threonyl-[protein] + ADP + H(+). In terms of biological role, has a role late in meiosis. This is Serine/threonine-protein kinase ppk24, mitochondrial (ppk24) from Schizosaccharomyces pombe (strain 972 / ATCC 24843) (Fission yeast).